Reading from the N-terminus, the 226-residue chain is MNENLFTSFATPTILGLPAAVPIILFPSLLIPTSKYLINNRLITTQQWLIQLTLKQMMTMHNTKGRTWSLMLISLITFIATTNLLGLLPHSFTPTTQLSMNLAMAIPLWAGTVATGFRLKAKNTLAHLLPQGTPTPLIPMLIIIETISLFIQPVALAVRLTANITAGHLLMHLIGAATMALSTISLPATPIIFTVLTLLTTLEIAVALIQAYVFTLLVSLYLHDNT.

A run of 6 helical transmembrane segments spans residues 12–32 (PTIL…LLIP), 68–88 (WSLM…LGLL), 97–117 (QLSM…ATGF), 138–158 (IPML…ALAV), 164–184 (ITAG…LSTI), and 200–222 (TTLE…SLYL).

This sequence belongs to the ATPase A chain family. In terms of assembly, component of the ATP synthase complex composed at least of ATP5F1A/subunit alpha, ATP5F1B/subunit beta, ATP5MC1/subunit c (homooctomer), MT-ATP6/subunit a, MT-ATP8/subunit 8, ATP5ME/subunit e, ATP5MF/subunit f, ATP5MG/subunit g, ATP5MK/subunit k, ATP5MJ/subunit j, ATP5F1C/subunit gamma, ATP5F1D/subunit delta, ATP5F1E/subunit epsilon, ATP5PF/subunit F6, ATP5PB/subunit b, ATP5PD/subunit d, ATP5PO/subunit OSCP. ATP synthase complex consists of a soluble F(1) head domain (subunits alpha(3) and beta(3)) - the catalytic core - and a membrane F(0) domain - the membrane proton channel (subunits c, a, 8, e, f, g, k and j). These two domains are linked by a central stalk (subunits gamma, delta, and epsilon) rotating inside the F1 region and a stationary peripheral stalk (subunits F6, b, d, and OSCP). Interacts with DNAJC30; interaction is direct.

The protein localises to the mitochondrion inner membrane. The catalysed reaction is H(+)(in) = H(+)(out). Its function is as follows. Subunit a, of the mitochondrial membrane ATP synthase complex (F(1)F(0) ATP synthase or Complex V) that produces ATP from ADP in the presence of a proton gradient across the membrane which is generated by electron transport complexes of the respiratory chain. ATP synthase complex consist of a soluble F(1) head domain - the catalytic core - and a membrane F(1) domain - the membrane proton channel. These two domains are linked by a central stalk rotating inside the F(1) region and a stationary peripheral stalk. During catalysis, ATP synthesis in the catalytic domain of F(1) is coupled via a rotary mechanism of the central stalk subunits to proton translocation. With the subunit c (ATP5MC1), forms the proton-conducting channel in the F(0) domain, that contains two crucial half-channels (inlet and outlet) that facilitate proton movement from the mitochondrial intermembrane space (IMS) into the matrix. Protons are taken up via the inlet half-channel and released through the outlet half-channel, following a Grotthuss mechanism. The polypeptide is ATP synthase F(0) complex subunit a (Hylobates lar (Lar gibbon)).